Here is a 309-residue protein sequence, read N- to C-terminus: UDP-N-acetylenolpyruvoylglucosamine reductase (309 aa).

In terms of domain architecture, FAD-binding PCMH-type spans 34–221 (RVGGPAQVLF…TAAREAAQPI (188 aa)). The active site involves Arg-179. Residue Ser-228 is the Proton donor of the active site. Glu-298 is a catalytic residue.

The protein belongs to the MurB family. Requires FAD as cofactor.

It localises to the cytoplasm. The catalysed reaction is UDP-N-acetyl-alpha-D-muramate + NADP(+) = UDP-N-acetyl-3-O-(1-carboxyvinyl)-alpha-D-glucosamine + NADPH + H(+). It participates in cell wall biogenesis; peptidoglycan biosynthesis. Functionally, cell wall formation. The chain is UDP-N-acetylenolpyruvoylglucosamine reductase from Methylorubrum extorquens (strain PA1) (Methylobacterium extorquens).